A 400-amino-acid polypeptide reads, in one-letter code: Large envelope protein (400 aa).

M1 carries the post-translational modification N-acetylmethionine. Disordered stretches follow at residues 1–20 (MGGW…SVPN) and 89–115 (STIP…LRDS). G2 carries the N-myristoyl glycine; by host lipid modification. The interval 2 to 119 (GGWSSKPRKG…PPLRDSHPQA (118 aa)) is pre-S1. Positions 2 to 174 (GGWSSKPRKG…SARTGDPVTN (173 aa)) are pre-S. The Virion surface; in external conformation segment spans residues 2 to 181 (GGWSSKPRKG…VTNMENITSG (180 aa)). Over 2-253 (GGWSSKPRKG…PGYRWMCLRR (252 aa)) the chain is Intravirion; in internal conformation. W4 carries an N-linked (GlcNAc...) asparagine glycan. The span at 89 to 106 (STIPPPASTNRQSGRQPT) shows a compositional bias: polar residues. The pre-S2 stretch occupies residues 120-174 (MQWNSTAFHQTLQDPRVRGLYLPAGGSSSGTVNPAPNIASHISSISARTGDPVTN). Residues 182–202 (FLGPLLVLQAGFFLLTRILTI) form a helical membrane-spanning segment. Residues 203–253 (PQSLDSWWTSLNFLGGSPVCLGQNSQSPTSNHSPTSCPPICPGYRWMCLRR) are Intravirion; in external conformation-facing. A helical transmembrane segment spans residues 254-274 (FIIFLFILLLCLIFLLVLLDY). Residues 275–348 (QGMLPVCPLI…WASVRFSWLS (74 aa)) are Virion surface-facing. Residue N320 is glycosylated (N-linked (GlcNAc...) asparagine; by host; partial). Residues 349 to 369 (LLVPFVQWFVGLSPTVWLSAI) traverse the membrane as a helical segment. Residues 370-375 (WMMWYW) are Intravirion-facing. The chain crosses the membrane as a helical span at residues 376–398 (GPSLYSIVSPFIPLLPIFFCLWV). The Virion surface segment spans residues 399–400 (YI).

This sequence belongs to the orthohepadnavirus major surface antigen family. In terms of assembly, in its internal form (Li-HBsAg), interacts with the capsid protein and with the isoform S. Interacts with host chaperone CANX. As to quaternary structure, associates with host chaperone CANX through its pre-S2 N glycan; this association may be essential for isoform M proper secretion. Interacts with isoform L. Interacts with the antigens of satellite virus HDV (HDVAgs); this interaction is required for encapsidation of HDV genomic RNA. In terms of processing, isoform M is N-terminally acetylated by host at a ratio of 90%, and N-glycosylated by host at the pre-S2 region. Post-translationally, myristoylated.

It localises to the virion membrane. Its function is as follows. The large envelope protein exists in two topological conformations, one which is termed 'external' or Le-HBsAg and the other 'internal' or Li-HBsAg. In its external conformation the protein attaches the virus to cell receptors and thereby initiating infection. This interaction determines the species specificity and liver tropism. This attachment induces virion internalization predominantly through caveolin-mediated endocytosis. The large envelope protein also assures fusion between virion membrane and endosomal membrane. In its internal conformation the protein plays a role in virion morphogenesis and mediates the contact with the nucleocapsid like a matrix protein. The middle envelope protein plays an important role in the budding of the virion. It is involved in the induction of budding in a nucleocapsid independent way. In this process the majority of envelope proteins bud to form subviral lipoprotein particles of 22 nm of diameter that do not contain a nucleocapsid. This is Large envelope protein from Hepatitis B virus genotype A2 subtype adw2 (strain Rutter 1979) (HBV-A).